The sequence spans 396 residues: S-adenosylmethionine synthase (396 aa).

His-16 contributes to the ATP binding site. A Mg(2+)-binding site is contributed by Asp-18. Glu-44 lines the K(+) pocket. Glu-57 and Gln-100 together coordinate L-methionine. A flexible loop region spans residues 100–110; the sequence is QSPDIAQGVDR. Residues 167 to 169, 232 to 233, Asp-241, 247 to 248, Ala-264, and Lys-268 each bind ATP; these read DAK, RF, and RK. L-methionine is bound at residue Asp-241. Lys-272 contacts L-methionine.

This sequence belongs to the AdoMet synthase family. Homotetramer; dimer of dimers. It depends on Mg(2+) as a cofactor. Requires K(+) as cofactor.

The protein resides in the cytoplasm. It carries out the reaction L-methionine + ATP + H2O = S-adenosyl-L-methionine + phosphate + diphosphate. It functions in the pathway amino-acid biosynthesis; S-adenosyl-L-methionine biosynthesis; S-adenosyl-L-methionine from L-methionine: step 1/1. Functionally, catalyzes the formation of S-adenosylmethionine (AdoMet) from methionine and ATP. The overall synthetic reaction is composed of two sequential steps, AdoMet formation and the subsequent tripolyphosphate hydrolysis which occurs prior to release of AdoMet from the enzyme. This chain is S-adenosylmethionine synthase, found in Ralstonia pickettii (strain 12J).